The primary structure comprises 66 residues: Large ribosomal subunit protein bL35 (66 aa).

Basic residues-rich tracts occupy residues 1 to 26 (MPKM…KRSH) and 38 to 48 (QKQKRKLRKSA). A disordered region spans residues 1-48 (MPKMKTHKGAAKRFKKTGSGKLKRSHAFTSHLFANKSQKQKRKLRKSA).

The protein belongs to the bacterial ribosomal protein bL35 family.

This Halalkalibacterium halodurans (strain ATCC BAA-125 / DSM 18197 / FERM 7344 / JCM 9153 / C-125) (Bacillus halodurans) protein is Large ribosomal subunit protein bL35.